Here is a 505-residue protein sequence, read N- to C-terminus: ATP synthase subunit alpha (505 aa).

172 to 179 provides a ligand contact to ATP; it reads GDRQIGKT.

This sequence belongs to the ATPase alpha/beta chains family. F-type ATPases have 2 components, CF(1) - the catalytic core - and CF(0) - the membrane proton channel. CF(1) has five subunits: alpha(3), beta(3), gamma(1), delta(1), epsilon(1). CF(0) has three main subunits: a(1), b(2) and c(9-12). The alpha and beta chains form an alternating ring which encloses part of the gamma chain. CF(1) is attached to CF(0) by a central stalk formed by the gamma and epsilon chains, while a peripheral stalk is formed by the delta and b chains.

It is found in the cell inner membrane. The enzyme catalyses ATP + H2O + 4 H(+)(in) = ADP + phosphate + 5 H(+)(out). Produces ATP from ADP in the presence of a proton gradient across the membrane. The alpha chain is a regulatory subunit. This is ATP synthase subunit alpha from Syntrophobacter fumaroxidans (strain DSM 10017 / MPOB).